Consider the following 570-residue polypeptide: Rqc2 homolog RqcH (570 aa).

Positions 1–173 are NFACT-N domain; that stretch reads MSFDGMFTYG…LPPAQDKISP (173 aa). Residues 179-281 are hhH domain; that stretch reads DDILRHLSFQ…ELLDRFYFGK (103 aa). Coiled-coil stretches lie at residues 279 to 336 and 368 to 430; these read FGKA…TANL and TPSE…VEGK. The interval 282–434 is coiled-coil-M (CCM); the sequence is AERDRVKQQA…ELVEGKYLRP (153 aa). Residues 446-570 form an NFACT-R region; sequence HNPVLETYES…ADTVIKLKKS (125 aa).

It belongs to the NEMF family. Associates with isolated or stalled 50S ribosomal subunits. Binds to RqcP. Interacts with ribosomal protein uL11. Displaced from the 50S subunit by thiostrepton. In crystallized 50S subunits RqcH is variously associated with A/P-site tRNA, P-site tRNA and RqcP, an E-site tRNA or A- and P-site tRNAs and RqcP2(YlmH).

Its function is as follows. Key component of the ribosome quality control system (RQC), a ribosome-associated complex that mediates the extraction of incompletely synthesized nascent chains from stalled ribosomes and their subsequent degradation. RqcH recruits Ala-charged tRNA, and with RqcP directs the elongation of stalled nascent chains on 50S ribosomal subunits, leading to non-templated C-terminal alanine extensions (Ala tail). The Ala tail promotes nascent chain degradation. RqcH, RqcP and charged tRNA(Ala) are necessary and sufficient to add an Ala tail to a model stalled nascent peptide; does not add Val. Binds the P-site tRNA in 50S ribosomal subunit, unwinds the anticodon stem and interacts with the splayed anticodon. Selectively binds tRNA(Ala) isoacceptors, even in the absence of the 50S ribosomal subunit. Adds between 1 and at least 8 Ala residues to the nascent chain; detection of the Ala tail requires either deletion of clpP or its inhibition. Binds to 50S ribosomal subunits, at least 30% of which contain a P-site tRNA and thus are obstructed. The sequence is that of Rqc2 homolog RqcH from Bacillus subtilis (strain 168).